Here is a 128-residue protein sequence, read N- to C-terminus: Fluoride-specific ion channel FluC (128 aa).

4 consecutive transmembrane segments (helical) span residues 5-25 (LFIS…GLLF), 34-54 (FGAL…LGLF), 67-87 (FLIT…SEVV), and 99-119 (FCVL…GIWI). Residues Gly-74 and Thr-77 each coordinate Na(+).

This sequence belongs to the fluoride channel Fluc/FEX (TC 1.A.43) family.

The protein resides in the cell inner membrane. It catalyses the reaction fluoride(in) = fluoride(out). Na(+) is not transported, but it plays an essential structural role and its presence is essential for fluoride channel function. Fluoride-specific ion channel. Important for reducing fluoride concentration in the cell, thus reducing its toxicity. This chain is Fluoride-specific ion channel FluC, found in Haemophilus influenzae (strain PittEE).